A 256-amino-acid chain; its full sequence is 5-keto-4-deoxy-D-glucarate aldolase (256 aa).

The active-site Proton acceptor is the histidine 50. Glutamine 151 provides a ligand contact to substrate. Glutamate 153 is a binding site for Mg(2+). Residues serine 178 and aspartate 179 each contribute to the substrate site. A Mg(2+)-binding site is contributed by aspartate 179.

The protein belongs to the HpcH/HpaI aldolase family. KDGluc aldolase subfamily. Homohexamer; trimer of dimers. Mg(2+) serves as cofactor.

It catalyses the reaction 5-dehydro-4-deoxy-D-glucarate = 2-hydroxy-3-oxopropanoate + pyruvate. It carries out the reaction 2-dehydro-3-deoxy-D-glucarate = 2-hydroxy-3-oxopropanoate + pyruvate. It functions in the pathway carbohydrate acid metabolism; galactarate degradation; D-glycerate from galactarate: step 2/3. Catalyzes the reversible retro-aldol cleavage of both 5-keto-4-deoxy-D-glucarate and 2-keto-3-deoxy-D-glucarate to pyruvate and tartronic semialdehyde. The sequence is that of 5-keto-4-deoxy-D-glucarate aldolase from Escherichia fergusonii (strain ATCC 35469 / DSM 13698 / CCUG 18766 / IAM 14443 / JCM 21226 / LMG 7866 / NBRC 102419 / NCTC 12128 / CDC 0568-73).